A 135-amino-acid polypeptide reads, in one-letter code: Sex-regulated protein janus-A (135 aa).

Substrate is bound at residue lysine 37. The active-site Proton acceptor is the histidine 63. A substrate-binding site is contributed by 104 to 106; that stretch reads SQG.

Belongs to the janus family.

Its function is as follows. JanA and janB regulate somatic sex differentiation. The protein is Sex-regulated protein janus-A (janA) of Drosophila erecta (Fruit fly).